The following is a 347-amino-acid chain: N-acetyl-gamma-glutamyl-phosphate reductase (347 aa).

The active site involves Cys152.

The protein belongs to the NAGSA dehydrogenase family. Type 1 subfamily.

It localises to the cytoplasm. The enzyme catalyses N-acetyl-L-glutamate 5-semialdehyde + phosphate + NADP(+) = N-acetyl-L-glutamyl 5-phosphate + NADPH + H(+). It functions in the pathway amino-acid biosynthesis; L-arginine biosynthesis; N(2)-acetyl-L-ornithine from L-glutamate: step 3/4. Functionally, catalyzes the NADPH-dependent reduction of N-acetyl-5-glutamyl phosphate to yield N-acetyl-L-glutamate 5-semialdehyde. In Neisseria gonorrhoeae (strain NCCP11945), this protein is N-acetyl-gamma-glutamyl-phosphate reductase.